A 517-amino-acid chain; its full sequence is Maturase K (517 aa).

The protein belongs to the intron maturase 2 family. MatK subfamily.

The protein localises to the plastid. The protein resides in the chloroplast. In terms of biological role, usually encoded in the trnK tRNA gene intron. Probably assists in splicing its own and other chloroplast group II introns. The chain is Maturase K from Trillium grandiflorum (Large-flowered trillium).